We begin with the raw amino-acid sequence, 623 residues long: Actin-related protein 8 (623 aa).

Residues 1-24 (MTQTDRDAENGRDREKDREKEQQR) show a composition bias toward basic and acidic residues. The tract at residues 1-29 (MTQTDRDAENGRDREKDREKEQQRGVKRP) is disordered. Position 283-286 (283-286 (DVGD)) interacts with ATP. Over residues 428 to 438 (TQSKQDQSSKA) the composition is skewed to low complexity. The tract at residues 428-458 (TQSKQDQSSKASADRKSFPKPSSFEGESSVC) is disordered.

Belongs to the actin family. ARP8 subfamily. As to quaternary structure, component of the chromatin remodeling INO80 complex; specifically part of a complex module associated with the DBINO domain of INO80. Exists as monomers and dimers, but the dimer is most probably the biologically relevant form required for stable interactions with histones that exploits the twofold symmetry of the nucleosome core.

Its subcellular location is the nucleus. The protein localises to the chromosome. Functionally, plays an important role in the functional organization of mitotic chromosomes. Exhibits low basal ATPase activity, and unable to polymerize. Proposed core component of the chromatin remodeling INO80 complex which is involved in transcriptional regulation, DNA replication and probably DNA repair. Required for the recruitment of INO80 (and probably the INO80 complex) to sites of DNA damage Strongly prefer nucleosomes and H3-H4 tetramers over H2A-H2B dimers, suggesting it may act as a nucleosome recognition module within the complex. The sequence is that of Actin-related protein 8 (actr8) from Danio rerio (Zebrafish).